Consider the following 442-residue polypeptide: Phosphoglucosamine mutase (442 aa).

Ser98 (phosphoserine intermediate) is an active-site residue. Residues Ser98, Asp236, Asp238, and Asp240 each coordinate Mg(2+). Ser98 bears the Phosphoserine mark.

It belongs to the phosphohexose mutase family. Mg(2+) serves as cofactor. Activated by phosphorylation.

The enzyme catalyses alpha-D-glucosamine 1-phosphate = D-glucosamine 6-phosphate. Catalyzes the conversion of glucosamine-6-phosphate to glucosamine-1-phosphate. This Natranaerobius thermophilus (strain ATCC BAA-1301 / DSM 18059 / JW/NM-WN-LF) protein is Phosphoglucosamine mutase.